The sequence spans 398 residues: Cysteine protease ATG4A (398 aa).

Cys77 serves as the catalytic Nucleophile. Active-site residues include Asp279 and His281. An LIR motif is present at residues 393–396; the sequence is FEIL.

This sequence belongs to the peptidase C54 family. Interacts with ATG9A; the interaction is direct.

Its subcellular location is the cytoplasm. It carries out the reaction [protein]-C-terminal L-amino acid-glycyl-phosphatidylethanolamide + H2O = [protein]-C-terminal L-amino acid-glycine + a 1,2-diacyl-sn-glycero-3-phosphoethanolamine. Inhibited by N-ethylmaleimide. Redox-regulated during autophagy since reducing conditions activate ATG4A whereas an oxidizing environment such as the presence of H(2)O(2) inhibits its activity. Functionally, cysteine protease that plays a key role in autophagy by mediating both proteolytic activation and delipidation of ATG8 family proteins. The protease activity is required for proteolytic activation of ATG8 family proteins: cleaves the C-terminal amino acid of ATG8 proteins to reveal a C-terminal glycine. Exposure of the glycine at the C-terminus is essential for ATG8 proteins conjugation to phosphatidylethanolamine (PE) and insertion to membranes, which is necessary for autophagy. Preferred substrate is GABARAPL2 followed by MAP1LC3A and GABARAP. Protease activity is also required to counteract formation of high-molecular weight conjugates of ATG8 proteins (ATG8ylation): acts as a deubiquitinating-like enzyme that removes ATG8 conjugated to other proteins, such as ATG3. In addition to the protease activity, also mediates delipidation of ATG8 family proteins. Catalyzes delipidation of PE-conjugated forms of ATG8 proteins during macroautophagy. Compared to ATG4B, the major protein for proteolytic activation of ATG8 proteins, shows weaker ability to cleave the C-terminal amino acid of ATG8 proteins, while it displays stronger delipidation activity. Involved in phagophore growth during mitophagy independently of its protease activity and of ATG8 proteins: acts by regulating ATG9A trafficking to mitochondria and promoting phagophore-endoplasmic reticulum contacts during the lipid transfer phase of mitophagy. Its function is as follows. (Microbial infection) Mediates cleavage of an ATG8 protein homolog coded in the genome of cytopathogenic bovine viral diarrhea virus (BVDV). The polypeptide is Cysteine protease ATG4A (Bos taurus (Bovine)).